Here is a 107-residue protein sequence, read N- to C-terminus: Ribonuclease P protein component 4 (107 aa).

The Zn(2+) site is built by cysteine 66, cysteine 69, cysteine 92, and cysteine 95.

Belongs to the eukaryotic/archaeal RNase P protein component 4 family. Consists of a catalytic RNA component and at least 4-5 protein subunits. The cofactor is Zn(2+).

The protein localises to the cytoplasm. It catalyses the reaction Endonucleolytic cleavage of RNA, removing 5'-extranucleotides from tRNA precursor.. Part of ribonuclease P, a protein complex that generates mature tRNA molecules by cleaving their 5'-ends. This is Ribonuclease P protein component 4 from Methanosarcina barkeri (strain Fusaro / DSM 804).